Here is a 233-residue protein sequence, read N- to C-terminus: ATP synthase subunit a 2 (233 aa).

5 helical membrane-spanning segments follow: residues 15-35, 78-98, 107-127, 169-189, and 194-214; these read FVVI…LVIG, YLAF…LTVV, SLST…IYGI, IMSG…FVPV, and LGLV…LVYI.

This sequence belongs to the ATPase A chain family. F-type ATPases have 2 components, CF(1) - the catalytic core - and CF(0) - the membrane proton channel. CF(1) has five subunits: alpha(3), beta(3), gamma(1), delta(1), epsilon(1). CF(0) has four main subunits: a, b, b' and c.

It localises to the cellular thylakoid membrane. Key component of the proton channel; it plays a direct role in the translocation of protons across the membrane. In Picosynechococcus sp. (strain ATCC 27264 / PCC 7002 / PR-6) (Agmenellum quadruplicatum), this protein is ATP synthase subunit a 2.